Here is a 168-residue protein sequence, read N- to C-terminus: MQRKFLRKKALSLRSRALCPQEIKKQYPYILLFHCSGLTSRQWRQIKNILCTIKGKTLFKPKEKKQNILPNNQGDWIAQLASSAGPTCILYLAKEAPNNTWSQLLPSASYSQNLVLLYGQDRSTVFNHMDIKKATTLETTSVFQQLFGFMFLPGACFLFLVEQANGRK.

The protein localises to the mitochondrion. This is an uncharacterized protein from Marchantia polymorpha (Common liverwort).